Consider the following 620-residue polypeptide: GTP-binding protein At3g49725, chloroplastic (620 aa).

A chloroplast-targeting transit peptide spans 1–65 (MSVTTSFGIW…SSFLARDRLR (65 aa)). The segment at 57–100 (SFLARDRLRSKTPSSSPFSSKRHTPKTSEIEEESTPKDSVLLNP) is disordered. A Hflx-type G domain is found at 346 to 585 (GTIAVVGYTN…LIDDKMKEKK (240 aa)). GTP contacts are provided by residues 352 to 359 (GYTNAGKS), 377 to 381 (FATLD), 399 to 402 (DTVG), and 468 to 471 (NKID). Positions 359 and 379 each coordinate Mg(2+). Acidic residues-rich tracts occupy residues 478–497 (EEEK…EDEA) and 511–521 (TVDEDQIQNGD). The interval 478 to 521 (EEEKYLDDGEGVGEEDEDEADLKAEETVDASEATVDEDQIQNGD) is disordered. 563 to 565 (SAL) contributes to the GTP binding site. A disordered region spans residues 597–620 (LHKRKWRPPRNDDEEERLIPLDQR).

This sequence belongs to the TRAFAC class OBG-HflX-like GTPase superfamily. HflX GTPase family. Requires Mg(2+) as cofactor.

The protein resides in the plastid. The protein localises to the chloroplast. The chain is GTP-binding protein At3g49725, chloroplastic from Arabidopsis thaliana (Mouse-ear cress).